A 487-amino-acid chain; its full sequence is Malonate-semialdehyde dehydrogenase (487 aa).

7 residues coordinate NAD(+): alanine 150, phenylalanine 152, lysine 176, glutamate 179, arginine 180, serine 229, and threonine 251. The Nucleophile role is filled by cysteine 284. Glutamate 382 serves as a coordination point for NAD(+).

The protein belongs to the aldehyde dehydrogenase family. IolA subfamily. In terms of assembly, homotetramer.

It carries out the reaction 3-oxopropanoate + NAD(+) + CoA + H2O = hydrogencarbonate + acetyl-CoA + NADH + H(+). It catalyses the reaction 2-methyl-3-oxopropanoate + NAD(+) + CoA + H2O = propanoyl-CoA + hydrogencarbonate + NADH + H(+). Its pathway is polyol metabolism; myo-inositol degradation into acetyl-CoA; acetyl-CoA from myo-inositol: step 7/7. Catalyzes the oxidation of malonate semialdehyde (MSA) and methylmalonate semialdehyde (MMSA) into acetyl-CoA and propanoyl-CoA, respectively. Is involved in a myo-inositol catabolic pathway. Bicarbonate, and not CO2, is the end-product of the enzymatic reaction. The chain is Malonate-semialdehyde dehydrogenase from Bacillus subtilis subsp. natto.